Reading from the N-terminus, the 476-residue chain is Bifunctional protein HldE (476 aa).

The tract at residues 1–319 (MKVSLPAFEK…RALSVNHGES (319 aa)) is ribokinase. Residue 195–198 (NMGE) participates in ATP binding. Asp264 is a catalytic residue. Residues 345-476 (MTNGCFDILH…SIIENIMANQ (132 aa)) form a cytidylyltransferase region.

The protein in the N-terminal section; belongs to the carbohydrate kinase PfkB family. This sequence in the C-terminal section; belongs to the cytidylyltransferase family. Homodimer.

The catalysed reaction is D-glycero-beta-D-manno-heptose 7-phosphate + ATP = D-glycero-beta-D-manno-heptose 1,7-bisphosphate + ADP + H(+). It carries out the reaction D-glycero-beta-D-manno-heptose 1-phosphate + ATP + H(+) = ADP-D-glycero-beta-D-manno-heptose + diphosphate. It participates in nucleotide-sugar biosynthesis; ADP-L-glycero-beta-D-manno-heptose biosynthesis; ADP-L-glycero-beta-D-manno-heptose from D-glycero-beta-D-manno-heptose 7-phosphate: step 1/4. It functions in the pathway nucleotide-sugar biosynthesis; ADP-L-glycero-beta-D-manno-heptose biosynthesis; ADP-L-glycero-beta-D-manno-heptose from D-glycero-beta-D-manno-heptose 7-phosphate: step 3/4. In terms of biological role, catalyzes the phosphorylation of D-glycero-D-manno-heptose 7-phosphate at the C-1 position to selectively form D-glycero-beta-D-manno-heptose-1,7-bisphosphate. Functionally, catalyzes the ADP transfer from ATP to D-glycero-beta-D-manno-heptose 1-phosphate, yielding ADP-D-glycero-beta-D-manno-heptose. The protein is Bifunctional protein HldE of Shewanella sediminis (strain HAW-EB3).